We begin with the raw amino-acid sequence, 116 residues long: Spexin (116 aa).

The signal sequence occupies residues 1–26 (MKGPSVLAVTAVVLLLVLSALENSSG). Positions 27-35 (APQRLSEKR) are excised as a propeptide. Gln49 carries the post-translational modification Glutamine amide. 2 consecutive propeptides follow at residues 50-116 (GRRF…LFNW) and 74-116 (PDLE…LFNW). Positions 52–77 (RFLSDQSRRKELADRPPPERRNPDLE) are disordered. The span at 53 to 75 (FLSDQSRRKELADRPPPERRNPD) shows a compositional bias: basic and acidic residues.

It belongs to the spexin family.

The protein localises to the secreted. Its subcellular location is the extracellular space. It localises to the cytoplasmic vesicle. The protein resides in the secretory vesicle. In terms of biological role, plays a role as a central modulator of cardiovascular and renal function and nociception. Also plays a role in energy metabolism and storage. Inhibits adrenocortical cell proliferation with minor stimulation on corticosteroid release. Acts as a ligand for galanin receptors GALR2 and GALR3. Intracerebroventricular administration of the peptide induces an increase in arterial blood pressure, a decrease in both heart rate and renal excretion and delayed natriuresis. Intraventricular administration of the peptide induces antinociceptive activity. Also induces contraction of muscarinic-like stomach smooth muscles. Intraperitoneal administration of the peptide induces a reduction in food consumption and body weight. Inhibits long chain fatty acid uptake into adipocytes. Its function is as follows. Intracerebroventricular administration of the peptide induces a decrease in heart rate, but no change in arterial pressure, and an increase in urine flow rate. Intraventricular administration of the peptide induces antinociceptive activity. The chain is Spexin (Spx) from Mus musculus (Mouse).